A 371-amino-acid polypeptide reads, in one-letter code: Flagellar P-ring protein (371 aa).

The first 28 residues, 1 to 28 (MPARPTPPAVPLALALAAALAAPAPAAA), serve as a signal peptide directing secretion.

The protein belongs to the FlgI family. The basal body constitutes a major portion of the flagellar organelle and consists of four rings (L,P,S, and M) mounted on a central rod.

The protein resides in the periplasm. Its subcellular location is the bacterial flagellum basal body. Functionally, assembles around the rod to form the L-ring and probably protects the motor/basal body from shearing forces during rotation. The polypeptide is Flagellar P-ring protein (Anaeromyxobacter dehalogenans (strain 2CP-C)).